We begin with the raw amino-acid sequence, 78 residues long: MSDIEARVKKIIAEQLGVEESQVTNEKAFVADLGADSLDTVELVMALEDEFGIEIPDEDAEKITTVQNAIDYANTHQA.

Positions 2 to 77 constitute a Carrier domain; that stretch reads SDIEARVKKI…NAIDYANTHQ (76 aa). The residue at position 37 (Ser-37) is an O-(pantetheine 4'-phosphoryl)serine.

This sequence belongs to the acyl carrier protein (ACP) family. 4'-phosphopantetheine is transferred from CoA to a specific serine of apo-ACP by AcpS. This modification is essential for activity because fatty acids are bound in thioester linkage to the sulfhydryl of the prosthetic group.

Its subcellular location is the cytoplasm. It functions in the pathway lipid metabolism; fatty acid biosynthesis. In terms of biological role, carrier of the growing fatty acid chain in fatty acid biosynthesis. This chain is Acyl carrier protein, found in Comamonas testosteroni (Pseudomonas testosteroni).